Here is a 146-residue protein sequence, read N- to C-terminus: Hemoglobin subunit beta (146 aa).

The Globin domain maps to 2–146 (HWTAEEKQLI…VAHALARKYH (145 aa)). Heme b-binding residues include H63 and H92.

Belongs to the globin family. Heterotetramer of two alpha chains and two beta chains. In terms of tissue distribution, red blood cells.

Functionally, involved in oxygen transport from the lung to the various peripheral tissues. The sequence is that of Hemoglobin subunit beta (HBB) from Phalacrocorax carbo (Great cormorant).